Consider the following 245-residue polypeptide: Phosphoribosylaminoimidazole-succinocarboxamide synthase (245 aa).

This sequence belongs to the SAICAR synthetase family.

The enzyme catalyses 5-amino-1-(5-phospho-D-ribosyl)imidazole-4-carboxylate + L-aspartate + ATP = (2S)-2-[5-amino-1-(5-phospho-beta-D-ribosyl)imidazole-4-carboxamido]succinate + ADP + phosphate + 2 H(+). It participates in purine metabolism; IMP biosynthesis via de novo pathway; 5-amino-1-(5-phospho-D-ribosyl)imidazole-4-carboxamide from 5-amino-1-(5-phospho-D-ribosyl)imidazole-4-carboxylate: step 1/2. This Acaryochloris marina (strain MBIC 11017) protein is Phosphoribosylaminoimidazole-succinocarboxamide synthase.